We begin with the raw amino-acid sequence, 459 residues long: Transcriptional coactivator YAP1-A (459 aa).

The segment covering 1 to 13 (MEPGSQQQPSAPA) has biased composition (low complexity). A disordered region spans residues 1–22 (MEPGSQQQPSAPAQQPPPVGHQ). Phosphoserine; by LATS1 and LATS2 is present on residues Ser-30, Ser-80, Ser-98, and Ser-134. Disordered stretches follow at residues 65–99 (FKQP…AHSS) and 126–145 (SAPH…PLPP). WW domains lie at 141 to 174 (VPLP…DPRK) and 199 to 232 (GPLP…DPRL). Residues 246–268 (NAPVKAPPALPPPSPQTGVLGSG) are disordered. Residues 250–260 (KAPPALPPPSP) are compositionally biased toward pro residues. A transactivation domain region spans residues 261–459 (QTGVLGSGGN…LDKESFLTWL (199 aa)). A coiled-coil region spans residues 269–297 (GNQQMRLQQLQMEKERLRLKHQELLRQVR). Residues 344–363 (GTYHSRDESTESGLSMSSYS) form a disordered region. Over residues 354–363 (ESGLSMSSYS) the composition is skewed to polar residues.

The protein belongs to the YAP1 family. As to quaternary structure, interacts with tead1. Phosphorylated by lats1 and lats2; leading to cytoplasmic translocation and inactivation.

It localises to the cytoplasm. The protein localises to the nucleus. It is found in the cell junction. The protein resides in the tight junction. Its subcellular location is the cell membrane. Its function is as follows. Transcriptional regulator which can act both as a coactivator and a corepressor and is the critical downstream regulatory target in the Hippo signaling pathway that plays a pivotal role in organ size control and tumor suppression by restricting proliferation and promoting apoptosis. Plays a key role in tissue tension and 3D tissue shape by regulating cortical actomyosin network formation. Required for expansion of the neural plate and neural plate border zone progenitor pools. Acts as a direct regulator of pax3 expression via interaction with tead1. This is Transcriptional coactivator YAP1-A from Xenopus laevis (African clawed frog).